Consider the following 329-residue polypeptide: MARRYLLEFEKPLVELEKQIEQIRELARDSEVDVSQQLLQLETLAARRREEIFNALTPAQKIQVARHPQRPSTLDFIQMFCDDWVELHGDRNCSDDKALIGGIARIEEKSVLVIGQQKGRDTKENVARNFGMAKPGGYRKALRLMNHADRFKLPIISFIDTPGAYAGLLAEEQGQGEAIAVNLREMFRLRVPIISTVIGEGGSGGALGIGVADRLLMFEHSVYTVASPEACASILWRDAGKAPDAAAALKITGSDLMALGIVDEVLSEPSGGNNWAPLKAGEVLKESLIRNLRELDSLSIRQLRDKRYEKFRQMGRFLEPSSLDEELIT.

Residues 40–294 enclose the CoA carboxyltransferase C-terminal domain; the sequence is QLETLAARRR…KESLIRNLRE (255 aa).

This sequence belongs to the AccA family. In terms of assembly, acetyl-CoA carboxylase is a heterohexamer composed of biotin carboxyl carrier protein (AccB), biotin carboxylase (AccC) and two subunits each of ACCase subunit alpha (AccA) and ACCase subunit beta (AccD).

The protein resides in the cytoplasm. It catalyses the reaction N(6)-carboxybiotinyl-L-lysyl-[protein] + acetyl-CoA = N(6)-biotinyl-L-lysyl-[protein] + malonyl-CoA. It participates in lipid metabolism; malonyl-CoA biosynthesis; malonyl-CoA from acetyl-CoA: step 1/1. Component of the acetyl coenzyme A carboxylase (ACC) complex. First, biotin carboxylase catalyzes the carboxylation of biotin on its carrier protein (BCCP) and then the CO(2) group is transferred by the carboxyltransferase to acetyl-CoA to form malonyl-CoA. The protein is Acetyl-coenzyme A carboxylase carboxyl transferase subunit alpha of Prochlorococcus marinus (strain MIT 9211).